Consider the following 82-residue polypeptide: Putative antitoxin RelB1 (82 aa).

Its function is as follows. Antitoxin component of a type II toxin-antitoxin (TA) system. Its cognate toxin is RelE1 (Potential). This chain is Putative antitoxin RelB1 (relB1), found in Methanocaldococcus jannaschii (strain ATCC 43067 / DSM 2661 / JAL-1 / JCM 10045 / NBRC 100440) (Methanococcus jannaschii).